Consider the following 688-residue polypeptide: Polyribonucleotide nucleotidyltransferase (688 aa).

Mg(2+)-binding residues include aspartate 484 and aspartate 490. In terms of domain architecture, KH spans 550–609; that stretch reads PTTEIFNVAPDKIVEIIGQGGRVIKEIVEKFEVKIDLNKPSGEVKIMGNKERVLKTKEFI. Residues 626-688 enclose the S1 motif domain; it reads DEVLEAQVKR…NKGKIALDLA (63 aa).

The protein belongs to the polyribonucleotide nucleotidyltransferase family. It depends on Mg(2+) as a cofactor.

The protein localises to the cytoplasm. It catalyses the reaction RNA(n+1) + phosphate = RNA(n) + a ribonucleoside 5'-diphosphate. In terms of biological role, involved in mRNA degradation. Catalyzes the phosphorolysis of single-stranded polyribonucleotides processively in the 3'- to 5'-direction. The polypeptide is Polyribonucleotide nucleotidyltransferase (Helicobacter pylori (strain ATCC 700392 / 26695) (Campylobacter pylori)).